Reading from the N-terminus, the 106-residue chain is 1-deoxy-D-xylulose 5-phosphate reductoisomerase (106 aa).

D3 is a binding site for Mn(2+). Positions 4, 5, 29, 52, 65, 70, 71, and 74 each coordinate 1-deoxy-D-xylulose 5-phosphate. E5 contacts Mn(2+). Position 74 (E74) interacts with Mn(2+).

The protein belongs to the DXR family. The cofactor is Mn(2+). Mg(2+) is required as a cofactor.

Its subcellular location is the plastid. The protein localises to the chloroplast stroma. The catalysed reaction is 2-C-methyl-D-erythritol 4-phosphate + NADP(+) = 1-deoxy-D-xylulose 5-phosphate + NADPH + H(+). It functions in the pathway isoprenoid biosynthesis; isopentenyl diphosphate biosynthesis via DXP pathway; isopentenyl diphosphate from 1-deoxy-D-xylulose 5-phosphate: step 1/6. Functionally, enzyme of the plastid non-mevalonate pathway for isoprenoid biosynthesis that catalyzes the NADPH-dependent rearrangement and reduction of 1-deoxy-D-xylulose-5-phosphate (DXP) to 2-C-methyl-D-erythritol 4-phosphate (MEP). Required for chloroplast development. This Origanum vulgare (Wild marjoram) protein is 1-deoxy-D-xylulose 5-phosphate reductoisomerase.